The sequence spans 352 residues: Protein-glutamate methylesterase/protein-glutamine glutaminase 2 (352 aa).

The 116-residue stretch at Met1–Asp116 folds into the Response regulatory domain. Asp50 is modified (4-aspartylphosphate). The CheB-type methylesterase domain maps to Ser159–Lys351. Active-site residues include Ser171, His197, and Asp293.

It belongs to the CheB family. Phosphorylated by CheA. Phosphorylation of the N-terminal regulatory domain activates the methylesterase activity.

Its subcellular location is the cytoplasm. It carries out the reaction [protein]-L-glutamate 5-O-methyl ester + H2O = L-glutamyl-[protein] + methanol + H(+). The catalysed reaction is L-glutaminyl-[protein] + H2O = L-glutamyl-[protein] + NH4(+). Involved in chemotaxis. Part of a chemotaxis signal transduction system that modulates chemotaxis in response to various stimuli. Catalyzes the demethylation of specific methylglutamate residues introduced into the chemoreceptors (methyl-accepting chemotaxis proteins or MCP) by CheR. Also mediates the irreversible deamidation of specific glutamine residues to glutamic acid. This chain is Protein-glutamate methylesterase/protein-glutamine glutaminase 2, found in Shewanella denitrificans (strain OS217 / ATCC BAA-1090 / DSM 15013).